The primary structure comprises 299 residues: Sulfate adenylyltransferase subunit 2 (299 aa).

Belongs to the PAPS reductase family. CysD subfamily. Sulfate-activating enzymes, NodP and NodQ, may be physically associated.

The catalysed reaction is sulfate + ATP + H(+) = adenosine 5'-phosphosulfate + diphosphate. Functionally, proposed to provide activated sulfate for transfer to nod factor. The polypeptide is Sulfate adenylyltransferase subunit 2 (nodP) (Rhizobium sp. (strain BR816)).